We begin with the raw amino-acid sequence, 448 residues long: tRNA(Ile)-lysidine synthase (448 aa).

Residue 25 to 30 coordinates ATP; the sequence is SGGSDS.

The protein belongs to the tRNA(Ile)-lysidine synthase family.

It localises to the cytoplasm. It carries out the reaction cytidine(34) in tRNA(Ile2) + L-lysine + ATP = lysidine(34) in tRNA(Ile2) + AMP + diphosphate + H(+). Its function is as follows. Ligates lysine onto the cytidine present at position 34 of the AUA codon-specific tRNA(Ile) that contains the anticodon CAU, in an ATP-dependent manner. Cytidine is converted to lysidine, thus changing the amino acid specificity of the tRNA from methionine to isoleucine. The polypeptide is tRNA(Ile)-lysidine synthase (Brucella canis (strain ATCC 23365 / NCTC 10854 / RM-666)).